We begin with the raw amino-acid sequence, 647 residues long: Glutamyl-tRNA(Gln) amidotransferase subunit B, mitochondrial (647 aa).

A disordered region spans residues 87-106 (QAKALKKSGHKKKKSSDNQT). Over residues 90–100 (ALKKSGHKKKK) the composition is skewed to basic residues.

Belongs to the GatB/GatE family. GatB subfamily. Subunit of the heterotrimeric GatCAB amidotransferase (AdT) complex, composed of A, B and C subunits.

The protein localises to the mitochondrion. It carries out the reaction L-glutamyl-tRNA(Gln) + L-glutamine + ATP + H2O = L-glutaminyl-tRNA(Gln) + L-glutamate + ADP + phosphate + H(+). In terms of biological role, allows the formation of correctly charged Gln-tRNA(Gln) through the transamidation of misacylated Glu-tRNA(Gln) in the mitochondria. The reaction takes place in the presence of glutamine and ATP through an activated gamma-phospho-Glu-tRNA(Gln). The polypeptide is Glutamyl-tRNA(Gln) amidotransferase subunit B, mitochondrial (Neurospora crassa (strain ATCC 24698 / 74-OR23-1A / CBS 708.71 / DSM 1257 / FGSC 987)).